The primary structure comprises 325 residues: MTTPFVLAVPSKGRLQENAEAFFARAGLTLSKLGGARDYRGTIAGLDNVEIAYLSASEIAAQLARGTVHLGITGEDLIRESIADADKKVALIEGLGFGGANVVVAVPQAWIDVRTMADLDDVTTGFRAQHNRRMRVATKYINLTRNFFAAHGVVDYRIVESAGATEGAPAVGTAEMIVDITSSGATLVANGLKVLDDGVILRSQANLVASRAADWSADALETARVILDRIAARARANKYKEVRTRFAGCDASLLTEAHNRFGVVSPFGGPTSSGMITLHCPPAQLYALGSFLRDHGADTVSIASLDYVLDRENPLFAKLESFLRQ.

This sequence belongs to the ATP phosphoribosyltransferase family. Long subfamily. Mg(2+) is required as a cofactor.

It is found in the cytoplasm. It catalyses the reaction 1-(5-phospho-beta-D-ribosyl)-ATP + diphosphate = 5-phospho-alpha-D-ribose 1-diphosphate + ATP. The protein operates within amino-acid biosynthesis; L-histidine biosynthesis; L-histidine from 5-phospho-alpha-D-ribose 1-diphosphate: step 1/9. Feedback inhibited by histidine. Functionally, catalyzes the condensation of ATP and 5-phosphoribose 1-diphosphate to form N'-(5'-phosphoribosyl)-ATP (PR-ATP). Has a crucial role in the pathway because the rate of histidine biosynthesis seems to be controlled primarily by regulation of HisG enzymatic activity. In Rhodopseudomonas palustris (strain BisB18), this protein is ATP phosphoribosyltransferase.